We begin with the raw amino-acid sequence, 367 residues long: Heme A synthase (367 aa).

5 helical membrane-spanning segments follow: residues 26-46, 111-131, 139-159, 174-194, and 212-232; these read IRGWLAAVLFALFALVLVGGA, LLARGIGVIFALPLFFFWVTG, LPLLGILALGGFQGFIGWWMV, LATHLTIACLIFAACMWIYRG, and AGAIAIMSLFQIYLGAIVAGL. His-274 is a heme binding site. A run of 3 helical transmembrane segments spans residues 276-296, 305-325, and 327-347; these read LGAYLLFALALWHMIASLRAA, SVLLFALVTVQAAIGITTLLL, and VPIGWGVLHQGGALVVLGFAI. Position 335 (His-335) interacts with heme.

It belongs to the COX15/CtaA family. Type 2 subfamily. As to quaternary structure, interacts with CtaB. It depends on heme b as a cofactor.

Its subcellular location is the cell membrane. The catalysed reaction is Fe(II)-heme o + 2 A + H2O = Fe(II)-heme a + 2 AH2. The protein operates within porphyrin-containing compound metabolism; heme A biosynthesis; heme A from heme O: step 1/1. Functionally, catalyzes the conversion of heme O to heme A by two successive hydroxylations of the methyl group at C8. The first hydroxylation forms heme I, the second hydroxylation results in an unstable dihydroxymethyl group, which spontaneously dehydrates, resulting in the formyl group of heme A. This Rhizobium meliloti (strain 1021) (Ensifer meliloti) protein is Heme A synthase.